A 133-amino-acid polypeptide reads, in one-letter code: Small ribosomal subunit protein mS23 (133 aa).

Belongs to the mitochondrion-specific ribosomal protein mS23 family. Component of the mitochondrial ribosome small subunit (28S) which comprises a 12S rRNA and about 30 distinct proteins.

Its subcellular location is the mitochondrion. The chain is Small ribosomal subunit protein mS23 (mrps-23) from Caenorhabditis elegans.